The chain runs to 1313 residues: Inter-alpha-trypsin inhibitor heavy chain H6 (1313 aa).

Residues 1-23 form the signal peptide; that stretch reads MSGWRYLICVSFLLTILLELTYQ. The 127-residue stretch at 24–150 folds into the VIT domain; it reads GPPVPASSST…EVTFSLAYEE (127 aa). N-linked (GlcNAc...) asparagine glycans are attached at residues Asn-83, Asn-374, Asn-540, and Asn-594. Residues 283–469 enclose the VWFA domain; the sequence is NVVFVIDVSS…LQLKGLYEEI (187 aa). Disordered stretches follow at residues 612–644, 783–817, 856–928, and 959–983; these read QPKQASEETRRQTSTSAGPDTIMPSSSSRHGLG, HSKPGAPSHPQLGALTSQAPKGLPQSRPGVSTLQV, LKPS…EPLP, and PSRPGVPTMSLLNSSRPTPEGSPPN. A compositionally biased stretch (polar residues) spans 623–640; sequence QTSTSAGPDTIMPSSSSR. The span at 864–875 shows a compositional bias: polar residues; it reads QISTSISLSKPE. Pro residues predominate over residues 876 to 888; that stretch reads TPNPHMPQTPLPP. A compositionally biased stretch (low complexity) spans 907–921; it reads TISSSTGPSSTTTTS. N-linked (GlcNAc...) asparagine glycosylation is found at Asn-971 and Asn-1231.

It belongs to the ITIH family.

Its subcellular location is the secreted. The polypeptide is Inter-alpha-trypsin inhibitor heavy chain H6 (ITIH6) (Homo sapiens (Human)).